A 159-amino-acid chain; its full sequence is Peptide methionine sulfoxide reductase MsrB (159 aa).

In terms of domain architecture, MsrB spans 14–137; it reads TEKLKENLTE…NSASLKFIAK (124 aa). C126 serves as the catalytic Nucleophile.

The protein belongs to the MsrB Met sulfoxide reductase family.

It carries out the reaction L-methionyl-[protein] + [thioredoxin]-disulfide + H2O = L-methionyl-(R)-S-oxide-[protein] + [thioredoxin]-dithiol. The sequence is that of Peptide methionine sulfoxide reductase MsrB from Hathewaya histolytica (Clostridium histolyticum).